A 286-amino-acid polypeptide reads, in one-letter code: MAGRYDRNPFDEDDVNPFAGGSVPPASNSRMPPLPHEPGFYNDRGATVDIPLDSTKDMKKKEKELQAKEAELNKRESELRRREEAASRAGIVIEEKNWPPFFPIIHHDISNEIPIHLQRMQYLAFSSLLGLAACLFWNIIATTAAWIKGAGVMIWLLAIIYFISGVPGAYVLWYRPLYNAMRTESALKFGWFFLFYLIHILFCIWSAVAPPFPFKGKSLAGILPAIDVIGNNAIVGIFYFIGFGLFCLESLLSVVVIQQVYMYFRGSGKAAEMKREAARGAMRSAF.

Basic and acidic residues-rich tracts occupy residues 1–10 (MAGRYDRNPF) and 54–63 (STKDMKKKEK). Residues 1-63 (MAGRYDRNPF…STKDMKKKEK (63 aa)) form a disordered region. Topologically, residues 1-126 (MAGRYDRNPF…LQRMQYLAFS (126 aa)) are cytoplasmic. Residues 52–89 (LDSTKDMKKKEKELQAKEAELNKRESELRRREEAASRA) adopt a coiled-coil conformation. A run of 4 helical transmembrane segments spans residues 127–147 (SLLGLAACLFWNIIATTAAWI), 152–172 (VMIWLLAIIYFISGVPGAYVL), 189–209 (FGWFFLFYLIHILFCIWSAVA), and 237–257 (IFYFIGFGLFCLESLLSVVVI). The Cytoplasmic portion of the chain corresponds to 258 to 286 (QQVYMYFRGSGKAAEMKREAARGAMRSAF).

Belongs to the SCAMP family.

Its subcellular location is the cell membrane. The protein localises to the cytoplasmic vesicle. It is found in the secretory vesicle membrane. Functionally, probably involved in membrane trafficking. The protein is Secretory carrier-associated membrane protein 2 (SCAMP2) of Oryza sativa subsp. japonica (Rice).